We begin with the raw amino-acid sequence, 543 residues long: Lipoyl synthase, apicoplast (543 aa).

Positions 1–63 (MAYFFDFPTD…LFSLLSASQS (63 aa)) are cleaved as a signal peptide. Cysteine 252, cysteine 257, cysteine 263, cysteine 278, cysteine 282, cysteine 285, and serine 493 together coordinate [4Fe-4S] cluster. Positions 264 to 482 (WNGGTATLIL…QDIAEEMGFK (219 aa)) constitute a Radical SAM core domain.

Belongs to the radical SAM superfamily. Lipoyl synthase family. [4Fe-4S] cluster is required as a cofactor.

It localises to the plastid. The protein localises to the apicoplast. It carries out the reaction [[Fe-S] cluster scaffold protein carrying a second [4Fe-4S](2+) cluster] + N(6)-octanoyl-L-lysyl-[protein] + 2 oxidized [2Fe-2S]-[ferredoxin] + 2 S-adenosyl-L-methionine + 4 H(+) = [[Fe-S] cluster scaffold protein] + N(6)-[(R)-dihydrolipoyl]-L-lysyl-[protein] + 4 Fe(3+) + 2 hydrogen sulfide + 2 5'-deoxyadenosine + 2 L-methionine + 2 reduced [2Fe-2S]-[ferredoxin]. The protein operates within protein modification; protein lipoylation via endogenous pathway; protein N(6)-(lipoyl)lysine from octanoyl-[acyl-carrier-protein]: step 2/2. Its function is as follows. Catalyzes the radical-mediated insertion of two sulfur atoms into the C-6 and C-8 positions of the octanoyl moiety bound to the lipoyl domains of lipoate-dependent enzymes, thereby converting the octanoylated domains into lipoylated derivatives. This is Lipoyl synthase, apicoplast from Toxoplasma gondii.